The chain runs to 458 residues: Pentatricopeptide repeat-containing protein At1g77405 (458 aa).

7 PPR repeats span residues 164 to 198 (TTAS…HCKP), 199 to 233 (DVYA…GFRY), 236 to 271 (DTYT…NRMF), 282 to 316 (DVVT…GCVP), 317 to 351 (NQVT…GHGV), 353 to 387 (GSST…GLVP), and 388 to 419 (REYT…MREG).

The protein belongs to the PPR family. P subfamily.

This is Pentatricopeptide repeat-containing protein At1g77405 from Arabidopsis thaliana (Mouse-ear cress).